Here is a 255-residue protein sequence, read N- to C-terminus: Imidazole glycerol phosphate synthase subunit HisF (255 aa).

Residues D11 and D130 contribute to the active site.

Belongs to the HisA/HisF family. As to quaternary structure, heterodimer of HisH and HisF.

Its subcellular location is the cytoplasm. It carries out the reaction 5-[(5-phospho-1-deoxy-D-ribulos-1-ylimino)methylamino]-1-(5-phospho-beta-D-ribosyl)imidazole-4-carboxamide + L-glutamine = D-erythro-1-(imidazol-4-yl)glycerol 3-phosphate + 5-amino-1-(5-phospho-beta-D-ribosyl)imidazole-4-carboxamide + L-glutamate + H(+). The protein operates within amino-acid biosynthesis; L-histidine biosynthesis; L-histidine from 5-phospho-alpha-D-ribose 1-diphosphate: step 5/9. Its function is as follows. IGPS catalyzes the conversion of PRFAR and glutamine to IGP, AICAR and glutamate. The HisF subunit catalyzes the cyclization activity that produces IGP and AICAR from PRFAR using the ammonia provided by the HisH subunit. This chain is Imidazole glycerol phosphate synthase subunit HisF, found in Rhodopseudomonas palustris (strain BisA53).